The primary structure comprises 618 residues: MEKLKRFLPEDQYEKLAAINNPYLHEFLAEWIEWLKPSKVFVCTDSPEDEEYVRWKALYYGEEKMLEMPRHTVHYDNYYDQARDKANTKLLVPKGVTLPFLNTMDREEGLKEIREIMKGIMKGKELFICFFVLGPRNSIFTIPAVQLTDSAYVAHSEFLLYRKGYEEFKRLGPTKNFLKFVHSAGELDERKTSKNLDKRRIYIDLVDETVYSANTQYGGNTIGLKKLAFRLTIQRAVREGWLSEHMFLMRVNGPNGRKTYFTGAYPSMCGKTSTAMIPWENIVGDDLVFIKNVDGTARAVNVEIGVFGIIEGINEKDDPIIWQVLHSPVEIIFSNVLVKDGKPYWNGMGIEIPDEGENHSGKWWRGKRDKEGNEIPPSHKNARFTVRLEAFPNLDKEALENPCGVEVGGMIFGGRDPDTWPPVREAFDWEHGVITMGASLESETTAATLGKEGVRAFNPMSILDFLSVHLGDYIRNYLEFGRKLKKKPKIFAVNYFLRENGKWLNEKLDKAVWLKWMELRVHGDVEAIETPIGYIPKYEDLRELFKQVLNKEYKKEDYEKQFKIRVPELLAKIDRIWNIYEPIGNIPEELFKQLEEERERLLKAREKYGDYISPFSLL.

Residues Arg83 and 217–219 each bind substrate; that span reads YGG. The Mn(2+) site is built by Lys226 and His245. Ser267 provides a ligand contact to substrate. 268-273 provides a ligand contact to GTP; that stretch reads MCGKTS. Cys269 is a catalytic residue. Asp286 serves as a coordination point for Mn(2+). 381–383 contacts substrate; sequence NAR. Positions 383 and 415 each coordinate GTP.

It belongs to the phosphoenolpyruvate carboxykinase [GTP] family. Mn(2+) serves as cofactor.

It is found in the cytoplasm. The enzyme catalyses oxaloacetate + GTP = phosphoenolpyruvate + GDP + CO2. It functions in the pathway carbohydrate biosynthesis; gluconeogenesis. Its function is as follows. Catalyzes the conversion of oxaloacetate (OAA) to phosphoenolpyruvate (PEP), the rate-limiting step in the metabolic pathway that produces glucose from lactate and other precursors derived from the citric acid cycle. This chain is Phosphoenolpyruvate carboxykinase [GTP], found in Pyrococcus abyssi (strain GE5 / Orsay).